The chain runs to 432 residues: MSVIVKVIGREIMDSRGNPTVEADVHLADGSWGRAAAPSGASTGTREALELRDGDKSRYLGKGVLKAVGFINNEIATALAGQNALEQSTVDQVMLDLDGTENKEKLGANAILAVSLATAKAAAQSKKVELYEHIADLNGTPGVYSMPLPMMNIINGGEHADNSVDIQEFMIQPIGAKNFREALRMGAEIFHSLAKVLKADGHSTAVGDEGGFAPNLASNEAALAAIKVAVANAGYELGKDITLALDCAASEFYDKEANIYNLKGEGKKFTSEEFNFFLQDLTQQYPIVSIEDGLDESDWDGFAHQTKLMGDKIQLVGDDLFVTNTKILKRGIDNGIANSILIKFNQIGSLTETLAAIKMAKDAGFTVVISHRSGETEDSTIADLAVGTAAGQIKTGSLSRSDRVAKYNQLLRIEEQLGDKAPYNGLKEVKGQ.

Residue Q167 coordinates (2R)-2-phosphoglycerate. Catalysis depends on E209, which acts as the Proton donor. Mg(2+)-binding residues include D246, E291, and D318. K343, R372, S373, and K394 together coordinate (2R)-2-phosphoglycerate. The Proton acceptor role is filled by K343.

The protein belongs to the enolase family. Component of the RNA degradosome, a multiprotein complex involved in RNA processing and mRNA degradation. It depends on Mg(2+) as a cofactor.

The protein localises to the cytoplasm. The protein resides in the secreted. It localises to the cell surface. The catalysed reaction is (2R)-2-phosphoglycerate = phosphoenolpyruvate + H2O. The protein operates within carbohydrate degradation; glycolysis; pyruvate from D-glyceraldehyde 3-phosphate: step 4/5. Its function is as follows. Catalyzes the reversible conversion of 2-phosphoglycerate (2-PG) into phosphoenolpyruvate (PEP). It is essential for the degradation of carbohydrates via glycolysis. The chain is Enolase from Pseudoalteromonas translucida (strain TAC 125).